Here is a 322-residue protein sequence, read N- to C-terminus: Acetyl-coenzyme A carboxylase carboxyl transferase subunit alpha (322 aa).

One can recognise a CoA carboxyltransferase C-terminal domain in the interval 39–293 (RLAAKSQQLT…KRALAESLRQ (255 aa)).

It belongs to the AccA family. In terms of assembly, acetyl-CoA carboxylase is a heterohexamer composed of biotin carboxyl carrier protein (AccB), biotin carboxylase (AccC) and two subunits each of ACCase subunit alpha (AccA) and ACCase subunit beta (AccD).

It is found in the cytoplasm. It catalyses the reaction N(6)-carboxybiotinyl-L-lysyl-[protein] + acetyl-CoA = N(6)-biotinyl-L-lysyl-[protein] + malonyl-CoA. Its pathway is lipid metabolism; malonyl-CoA biosynthesis; malonyl-CoA from acetyl-CoA: step 1/1. Functionally, component of the acetyl coenzyme A carboxylase (ACC) complex. First, biotin carboxylase catalyzes the carboxylation of biotin on its carrier protein (BCCP) and then the CO(2) group is transferred by the carboxyltransferase to acetyl-CoA to form malonyl-CoA. The polypeptide is Acetyl-coenzyme A carboxylase carboxyl transferase subunit alpha (Ralstonia nicotianae (strain ATCC BAA-1114 / GMI1000) (Ralstonia solanacearum)).